The sequence spans 687 residues: MSDPSTYRPAPGTIPTEPGVYKFRDPEGRVIYVGKAINLRSRLSNYFQDLSVLHPRTRQMVTTATSVEWTVVASEVEALQLEYTWIKKFDPHFNVKYRDDKTYPVLAVSVGERFPRAYFYRGPQRKGVRYYGPYSHAWAVRETLDLLTRVFPIRTCTKAVFNRHESLGRPCLLGYIDKCSAPCIGRVSESEHRIIVDGFCSFMAGNTDSVVRRLTNEMISASEALDFEKAARKRDDLNAVRKITEQQAVVLGDGTDADVIAVAADDLEASIQLFHVRSGKIRGQRGWIVERTDNSESELEELLQSFLIRFYSDEVAHEDQVSDKELTVARRGVDKQSHESDLANRRINTSVVPKEVLVHKAPANVEQTTAVLRSLRHSNVDVRVPQRGDKRALADTVFANAQEALRQHKIKRVSDLTTRSAALQEIHEALGLDEPPLRIECTDISHIQGTDVVASLVVFEDGLPKKSDYRRYKIKEAAGEGKSNDVGSIAEVVRRRFARYKNDCRMVPQEDEFDGSRFEDESLAGENTVAAKQRFAYSPQLFIVDGGAPQVAAAQDVLDELGITDVALIGIAKRLEEIWLPGEEDPLILPRNSQGLYLIQQLRDEAHRFAITFHRQQRSQRMRRSILDDIKGLGPARRKVLVAHFGSVKELKKASESEIMMVNGIGPALAHSIYVALHPDSDDSSVQ.

Residues 16–95 (TEPGVYKFRD…IKKFDPHFNV (80 aa)) enclose the GIY-YIG domain. A UVR domain is found at 208-243 (DSVVRRLTNEMISASEALDFEKAARKRDDLNAVRKI).

The protein belongs to the UvrC family. As to quaternary structure, interacts with UvrB in an incision complex.

It localises to the cytoplasm. The UvrABC repair system catalyzes the recognition and processing of DNA lesions. UvrC both incises the 5' and 3' sides of the lesion. The N-terminal half is responsible for the 3' incision and the C-terminal half is responsible for the 5' incision. This Corynebacterium diphtheriae (strain ATCC 700971 / NCTC 13129 / Biotype gravis) protein is UvrABC system protein C.